The chain runs to 156 residues: Small ribosomal subunit protein uS7 (156 aa).

This sequence belongs to the universal ribosomal protein uS7 family. In terms of assembly, part of the 30S ribosomal subunit. Contacts proteins S9 and S11.

Its function is as follows. One of the primary rRNA binding proteins, it binds directly to 16S rRNA where it nucleates assembly of the head domain of the 30S subunit. Is located at the subunit interface close to the decoding center, probably blocks exit of the E-site tRNA. This Geobacillus kaustophilus (strain HTA426) protein is Small ribosomal subunit protein uS7.